Reading from the N-terminus, the 60-residue chain is Sperm protamine P1 (60 aa).

A disordered region spans residues Met1 to Tyr60.

The protein belongs to the protamine P1 family. As to expression, testis.

The protein resides in the nucleus. Its subcellular location is the chromosome. Protamines substitute for histones in the chromatin of sperm during the haploid phase of spermatogenesis. They compact sperm DNA into a highly condensed, stable and inactive complex. This chain is Sperm protamine P1 (PRM1), found in Phascolarctos cinereus (Koala).